The sequence spans 382 residues: Kelch domain-containing protein 3 (382 aa).

Kelch repeat units lie at residues 25 to 77 (RVYS…PYMR), 88 to 138 (TVFL…VLGK), 139 to 189 (TMYI…TMLG), 191 to 249 (HMYV…GYNG), and 251 to 301 (LYIF…IVGD).

Component of a CRL2(KLHDC3) complex, also named ECS(KLHDC3) complex, composed of CUL2, Elongin BC (ELOB and ELOC), RBX1 and substrate-specific adapter KLHDC3. May form oligomers as a KLHDC3-ELOB-ELOC complex; this interaction is likely autoinhibitory for the E3 ligase complex.

The protein localises to the cytoplasm. The protein operates within protein modification; protein ubiquitination. Its function is as follows. Substrate-recognition component of a Cul2-RING (CRL2) E3 ubiquitin-protein ligase complex of the DesCEND (destruction via C-end degrons) pathway, which recognizes a C-degron located at the extreme C terminus of target proteins, leading to their ubiquitination and degradation. The C-degron recognized by the DesCEND pathway is usually a motif of less than ten residues and can be present in full-length proteins, truncated proteins or proteolytically cleaved forms. The CRL2(KLHDC3) complex specifically recognizes proteins with a glycine (Gly) at the C-terminus, leading to their ubiquitination and degradation: recognizes the C-terminal -Arg-(Xaa)n-Arg-Gly, -Arg-(Xaa)n-Lys-Gly, and -Arg-(Xaa)n-Gln-Gly degrons. The CRL2(KLHDC3) complex mediates ubiquitination and degradation of truncated SELENOV and SEPHS2 selenoproteins produced by failed UGA/Sec decoding, which end with a glycine. May be involved in meiotic recombination process. In Bos taurus (Bovine), this protein is Kelch domain-containing protein 3.